A 165-amino-acid chain; its full sequence is Cytochrome c-type biogenesis protein CcmE (165 aa).

The Cytoplasmic segment spans residues M1 to R29. The helical; Signal-anchor for type II membrane protein transmembrane segment at L30–A50 threads the bilayer. Topologically, residues F51–K165 are periplasmic. H143 and Y147 together coordinate heme.

It belongs to the CcmE/CycJ family.

Its subcellular location is the cell inner membrane. In terms of biological role, heme chaperone required for the biogenesis of c-type cytochromes. Transiently binds heme delivered by CcmC and transfers the heme to apo-cytochromes in a process facilitated by CcmF and CcmH. This is Cytochrome c-type biogenesis protein CcmE from Brucella canis (strain ATCC 23365 / NCTC 10854 / RM-666).